Here is a 178-residue protein sequence, read N- to C-terminus: Inorganic pyrophosphatase (178 aa).

Positions 30, 44, and 56 each coordinate substrate. Residues Asp-66, Asp-71, and Asp-103 each contribute to the Mg(2+) site. Tyr-140 is a substrate binding site.

The protein belongs to the PPase family. As to quaternary structure, homohexamer. Requires Mg(2+) as cofactor.

The protein localises to the cytoplasm. It carries out the reaction diphosphate + H2O = 2 phosphate + H(+). Catalyzes the hydrolysis of inorganic pyrophosphate (PPi) forming two phosphate ions. The sequence is that of Inorganic pyrophosphatase from Pyrococcus abyssi (strain GE5 / Orsay).